The chain runs to 418 residues: Tyrosine--tRNA ligase (418 aa).

L-tyrosine is bound at residue tyrosine 34. Positions 39–48 (PTADSLHLGH) match the 'HIGH' region motif. Residues tyrosine 169 and glutamine 173 each contribute to the L-tyrosine site. Positions 229–233 (KFGKS) match the 'KMSKS' region motif. Lysine 232 contacts ATP. The S4 RNA-binding domain maps to 352–418 (LNIVEILVSS…GKKKYAVLTY (67 aa)).

Belongs to the class-I aminoacyl-tRNA synthetase family. TyrS type 1 subfamily. As to quaternary structure, homodimer.

The protein localises to the cytoplasm. The enzyme catalyses tRNA(Tyr) + L-tyrosine + ATP = L-tyrosyl-tRNA(Tyr) + AMP + diphosphate + H(+). Catalyzes the attachment of tyrosine to tRNA(Tyr) in a two-step reaction: tyrosine is first activated by ATP to form Tyr-AMP and then transferred to the acceptor end of tRNA(Tyr). In Streptococcus uberis (strain ATCC BAA-854 / 0140J), this protein is Tyrosine--tRNA ligase.